We begin with the raw amino-acid sequence, 1747 residues long: E3 ubiquitin-protein ligase listerin (1747 aa).

A disordered region spans residues 1 to 24 (MGGKTKQAPRTKNNAKPSSSSRTA). The segment covering 8 to 24 (APRTKNNAKPSSSSRTA) has biased composition (polar residues). HEAT repeat units follow at residues 65 to 102 (AAIS…QSDV), 106 to 144 (KNIL…KCKK), 346 to 383 (NIRK…KVTQ), 424 to 461 (NAYF…NVLE), and 508 to 547 (KFWI…ANPS). Position 566 is a phosphoserine (Ser-566). HEAT repeat units lie at residues 612 to 653 (SRYI…LLGQ), 664 to 711 (EIVF…CAEA), 789 to 825 (SFIA…EHRP), 952 to 989 (LSRN…DPED), 1005 to 1042 (KWNE…ELVL), 1053 to 1090 (GNSS…FCPQ), 1129 to 1166 (KLSQ…NFEG), 1216 to 1258 (VEFI…SIAQ), 1269 to 1307 (VAVY…LFAK), 1330 to 1363 (FQAC…NSNI), 1364 to 1400 (TLDH…HFVA), and 1500 to 1539 (ENFL…QKDR). An RING-type zinc finger spans residues 1697–1744 (CYVCYTVIHQETCQLPKLTCKTCKKKFHGPCLYKWFTTSSKSTCPICR).

Belongs to the LTN1 family. In terms of assembly, component of the ribosome quality control complex (RQC), composed of at least the E3 ubiquitin ligase l(3)76BDr/LTN1 and Clbn/NEMF. The complex probably also contains TCF25 as well as TER94/VCP and its ubiquitin-binding cofactors. RQC forms a stable complex with 60S ribosomal subunits.

Its subcellular location is the cytoplasm. The protein resides in the cytosol. It carries out the reaction S-ubiquitinyl-[E2 ubiquitin-conjugating enzyme]-L-cysteine + [acceptor protein]-L-lysine = [E2 ubiquitin-conjugating enzyme]-L-cysteine + N(6)-ubiquitinyl-[acceptor protein]-L-lysine.. It participates in protein modification; protein ubiquitination. E3 ubiquitin-protein ligase component of the ribosome quality control complex (RQC), a ribosome-associated complex that mediates ubiquitination and extraction of incompletely synthesized nascent chains for proteasomal degradation. Ubiquitination leads to TER94/VCP recruitment for extraction and degradation of the incomplete translation product. The protein is E3 ubiquitin-protein ligase listerin of Drosophila melanogaster (Fruit fly).